The chain runs to 422 residues: Synaptotagmin-1 (422 aa).

Over 1 to 57 the chain is Vesicular; sequence MVSESHHEALAAPPVTTVATVLPHNATEPASPGEGKEDAFSKLKEKFMNELHKIPLP. The N-linked (GlcNAc...) asparagine glycan is linked to Asn-25. A helical membrane pass occupies residues 58–80; sequence PWALIAIAIVAVLLVLTCCFCIC. Residues Cys-75, Cys-76, Cys-78, Cys-80, and Cys-83 are each lipidated (S-palmitoyl cysteine). Residues 81-422 lie on the Cytoplasmic side of the membrane; that stretch reads KKCLFKKKNK…EVDAMLAVKK (342 aa). Residues 113 to 142 are disordered; it reads TMKDQALKDDDAETGLTDGEEKEEPKEEEK. A compositionally biased stretch (acidic residues) spans 122–134; that stretch reads DDAETGLTDGEEK. Phosphothreonine is present on Thr-129. The tract at residues 136–382 is phospholipid binding; the sequence is EPKEEEKLGK…AIGKVFVGYN (247 aa). Residues 142-261 enclose the C2 1 domain; the sequence is KLGKLQYSLD…DFGHVTEEWR (120 aa). Ca(2+) contacts are provided by Leu-172, Asp-173, and Asp-179. Residue Tyr-230 is modified to Phosphotyrosine. Positions 231, 232, 233, 236, 237, and 239 each coordinate Ca(2+). Ser-265 is modified (phosphoserine). In terms of domain architecture, C2 2 spans 273-406; the sequence is KLGDICFSLR…NPRRPIAQWH (134 aa). Ca(2+)-binding residues include Asp-304 and Asp-310. Phosphoserine is present on residues Ser-343 and Ser-345. Ca(2+)-binding residues include Asp-364, Asp-366, and Asp-372.

It belongs to the synaptotagmin family. Homotetramer. Heterodimer; heterodimerizes with SYT2 in presence of calcium. Interacts with SCAMP5. Interacts with STON2. Forms a complex with SV2B, syntaxin 1 and SNAP25. Interacts with SV2A, SV2B and SV2C. Interacts with RIMS1. Interacts with PRRT2. Interacts with DNAJC5 in a phosphorylation-dependent manner. Interacts (via N-terminus) with RAB3A. Interacts with SYT12. Interacts with calmodulin. Interacts with DNM1 (via C-terminal proline-rich domain (PRD)); this interaction facilitates vesicle fission during clathrin-mediated endocytosis (CME). Ca(2+) is required as a cofactor. In terms of processing, glycosylated.

Its subcellular location is the cytoplasmic vesicle. The protein localises to the secretory vesicle membrane. It localises to the secretory vesicle. The protein resides in the synaptic vesicle membrane. It is found in the chromaffin granule membrane. Its subcellular location is the cytoplasm. Its function is as follows. Calcium sensor that participates in triggering neurotransmitter release at the synapse. May have a regulatory role in the membrane interactions during trafficking of synaptic vesicles at the active zone of the synapse. It binds acidic phospholipids with a specificity that requires the presence of both an acidic head group and a diacyl backbone. A Ca(2+)-dependent interaction between synaptotagmin and putative receptors for activated protein kinase C has also been reported. It can bind to at least three additional proteins in a Ca(2+)-independent manner; these are neurexins, syntaxin and AP2. Plays a role in dendrite formation by melanocytes. This is Synaptotagmin-1 from Bos taurus (Bovine).